A 392-amino-acid chain; its full sequence is Enoyl-[acyl-carrier-protein] reductase [NADH] (392 aa).

Residues 46–51 (GSSSGY), 72–73 (LE), 108–109 (DA), and 136–137 (VA) each bind NAD(+). Tyrosine 225 contacts substrate. Residue tyrosine 235 is the Proton donor of the active site. Residues lysine 244 and 273–275 (LVT) each bind NAD(+).

The protein belongs to the TER reductase family. Monomer.

It catalyses the reaction a 2,3-saturated acyl-[ACP] + NAD(+) = a (2E)-enoyl-[ACP] + NADH + H(+). It functions in the pathway lipid metabolism; fatty acid biosynthesis. In terms of biological role, involved in the final reduction of the elongation cycle of fatty acid synthesis (FAS II). Catalyzes the reduction of a carbon-carbon double bond in an enoyl moiety that is covalently linked to an acyl carrier protein (ACP). The sequence is that of Enoyl-[acyl-carrier-protein] reductase [NADH] from Streptomyces avermitilis (strain ATCC 31267 / DSM 46492 / JCM 5070 / NBRC 14893 / NCIMB 12804 / NRRL 8165 / MA-4680).